Reading from the N-terminus, the 630-residue chain is A-type voltage-gated potassium channel KCND2 (630 aa).

The Cytoplasmic portion of the chain corresponds to methionine 1 to alanine 184. The interval alanine 2–methionine 20 is interaction with KCNIP1, KCNIP2, and other family members. Position 38 is a phosphothreonine (threonine 38). Residues glutamate 71–aspartate 90 are interaction with KCNIP1. Zn(2+) is bound by residues histidine 105, cysteine 111, cysteine 132, and cysteine 133. The chain crosses the membrane as a helical span at residues leucine 185–threonine 206. The Extracellular segment spans residues valine 207–alanine 226. The chain crosses the membrane as a helical span at residues valine 227–alanine 249. Residues alanine 250 to arginine 256 are Cytoplasmic-facing. Residues phenylalanine 257 to aspartate 281 form a helical membrane-spanning segment. At asparagine 282–glycine 287 the chain is on the extracellular side. Residues alanine 288–serine 307 traverse the membrane as a helical; Voltage-sensor segment. The Cytoplasmic segment spans residues glutamine 308 to alanine 321. The interval glutamine 308–alanine 321 is S4-S5 linker. The helical transmembrane segment at serine 322–alanine 345 threads the bilayer. Residues glutamate 346–isoleucine 357 lie on the Extracellular side of the membrane. An intramembrane region (helical) is located at residues proline 358–threonine 369. Positions 370, 371, 372, and 373 each coordinate K(+). The Selectivity filter motif lies at threonine 370 to aspartate 375. The stretch at threonine 370–valine 377 is an intramembrane region. Residues proline 378–threonine 380 are Extracellular-facing. Residues isoleucine 381–proline 403 form a helical membrane-spanning segment. Over valine 404–leucine 630 the chain is Cytoplasmic. Serine 438 carries the phosphoserine modification. The tract at residues phenylalanine 474–threonine 489 is required for dendritic targeting. Residues phenylalanine 474 to leucine 630 are important for normal channel activation and inactivation, for interaction with KCNIP2, and probably other family members as well. Phosphoserine is present on residues serine 548, serine 552, serine 572, and serine 575. The segment at isoleucine 600–asparagine 623 is disordered. Phosphothreonine is present on residues threonine 602 and threonine 607. Serine 616 carries the phosphoserine modification. The PDZ-binding motif lies at valine 627–leucine 630.

The protein belongs to the potassium channel family. D (Shal) (TC 1.A.1.2) subfamily. Kv4.2/KCND2 sub-subfamily. As to quaternary structure, homotetramer or heterotetramer with KCND1 or KCND3. Associates with the regulatory subunits KCNIP1, KCNIP2, KCNIP3 and KCNIP4. Interacts with DPP6, DPP10, DLG4 and DLG1. In vivo, probably exists as heteromeric complex containing variable proportions of KCND1, KCND2, KCND3, KCNIP1, KCNIP2, KCNIP3, KCNIP4, DPP6 and DPP10. The tetrameric channel can associate with up to four regulatory subunits, such as KCNIP2 or KCNIP4. Interaction with KCNIP3 promotes tetramerization and formation of a functional potassium channel. Interaction with four KCNIP4 chains does not reduce interaction with DPP10. Probably part of a complex consisting of KCNIP1, KCNIP2 isoform 3 and KCND2. Interacts with FLNA and FLNC. Interacts with NCS1/FREQ. Identified in a complex with cAMP-dependent protein kinase (PKA), CAV3, AKAP6 and KCND3 in cardiac myocytes. Interacts (via S1 and S2 helices) with DPP6; this interaction stabilizes the conformation of the S1-S2 helices and facilitates S4 conformational change, including S4 sliding up and down, thereby accelerating activation, inactivation, and recovery. Post-translationally, phosphorylation at Ser-438 in response to MAPK activation is increased in stimulated dendrites. Interaction with KCNIP2 and DPP6 propomtes phosphorylation by PKA at Ser-552. Phosphorylation at Ser-552 has no effect on interaction with KCNIP3, but is required for the regulation of channel activity by KCNIP3. Phosphorylation at Ser-552 leads to KCND2 internalization. Phosphorylated by MAPK in response to signaling via the metabotropic glutamate receptor GRM5. Phosphorylation at Ser-616 is required for the down-regulation of neuronal A-type currents in response to signaling via GRM5. In terms of tissue distribution, detected in brain frontal cortex.

It localises to the cell membrane. The protein resides in the cell projection. The protein localises to the dendrite. It is found in the synapse. Its subcellular location is the perikaryon. It localises to the postsynaptic cell membrane. The protein resides in the dendritic spine. The protein localises to the sarcolemma. It is found in the cell junction. Its subcellular location is the membrane. It localises to the caveola. It carries out the reaction K(+)(in) = K(+)(out). Its function is as follows. Voltage-gated potassium channel that mediates transmembrane potassium transport in excitable membranes, primarily in the brain. Mediates the major part of the dendritic A-type current I(SA) in brain neurons. This current is activated at membrane potentials that are below the threshold for action potentials. It regulates neuronal excitability, prolongs the latency before the first spike in a series of action potentials, regulates the frequency of repetitive action potential firing, shortens the duration of action potentials and regulates the back-propagation of action potentials from the neuronal cell body to the dendrites. Contributes to the regulation of the circadian rhythm of action potential firing in suprachiasmatic nucleus neurons, which regulates the circadian rhythm of locomotor activity. Functions downstream of the metabotropic glutamate receptor GRM5 and plays a role in neuronal excitability and in nociception mediated by activation of GRM5. Mediates the transient outward current I(to) in rodent heart left ventricle apex cells, but not in human heart, where this current is mediated by another family member. Forms tetrameric potassium-selective channels through which potassium ions pass in accordance with their electrochemical gradient. The channel alternates between opened and closed conformations in response to the voltage difference across the membrane. Can form functional homotetrameric channels and heterotetrameric channels that contain variable proportions of KCND2 and KCND3; channel properties depend on the type of pore-forming alpha subunits that are part of the channel. In vivo, membranes probably contain a mixture of heteromeric potassium channel complexes. Interaction with specific isoforms of the regulatory subunits KCNIP1, KCNIP2, KCNIP3 or KCNIP4 strongly increases expression at the cell surface and thereby increases channel activity; it modulates the kinetics of channel activation and inactivation, shifts the threshold for channel activation to more negative voltage values, shifts the threshold for inactivation to less negative voltages and accelerates recovery after inactivation. Likewise, interaction with DPP6 or DPP10 promotes expression at the cell membrane and regulates both channel characteristics and activity. Upon depolarization, the channel goes from a resting closed state (C state) to an activated but non-conducting state (C* state), from there, the channel may either inactivate (I state) or open (O state). This is A-type voltage-gated potassium channel KCND2 from Oryctolagus cuniculus (Rabbit).